A 542-amino-acid polypeptide reads, in one-letter code: N-substituted formamide deformylase (542 aa).

A propeptide spanning residues 1 to 2 (MT) is cleaved from the precursor.

In terms of assembly, homodimer. It depends on Zn(2+) as a cofactor.

It catalyses the reaction N-benzylformamide + H2O = benzylamine + formate. Completely inhibited by HgCl(2), CuCl, CuCl(2) and AgNO(3). Partially inhibited by ZnCl(2) and SnCl(2). Almost completely inhibited by the reducing reagent DTT. Partially inhibited by phenylhydrazine. Moderately inhibited by phenanthroline and 8-hydroxyquinoline. Completely inhibited by the thiol-specific inhibitors N-ethylmaleimide and p-chloromercuribenzoate. Not inhibited by the carbonyl-specific inhibitors aminoguanidine and semicarbazide, the chelating agents alpha,alpha'-dipyridyl, KCN, diethyldithiocarbamate and EDTA, or the oxidizing reagents and serine-modifying reagents such as H(2)O(2), ammonium persulfate, phenylmethanesulfonyl fluoride and diisopropyl fluorophosphates. In terms of biological role, hydrolyzes N-substituted formamides, but not amides. N-benzylformamide is the preferred substrate, while N-butylformamide is hydrolyzed at a much lower rate. Has very low activity towards allylformamide, N-(2-cyclohex-1-enylethyl)formamide and N-(alpha-methylbenzyl)formamide. The sequence is that of N-substituted formamide deformylase from Arthrobacter pascens.